The following is a 135-amino-acid chain: L-ectoine synthase (135 aa).

The protein belongs to the ectoine synthase family.

It carries out the reaction (2S)-4-acetamido-2-aminobutanoate = L-ectoine + H2O. It participates in amine and polyamine biosynthesis; ectoine biosynthesis; L-ectoine from L-aspartate 4-semialdehyde: step 3/3. Its function is as follows. Catalyzes the circularization of gamma-N-acetyl-alpha,gamma-diaminobutyric acid (ADABA) to ectoine (1,4,5,6-tetrahydro-2-methyl-4-pyrimidine carboxylic acid), which is an excellent osmoprotectant. The sequence is that of L-ectoine synthase from Saccharopolyspora erythraea (strain ATCC 11635 / DSM 40517 / JCM 4748 / NBRC 13426 / NCIMB 8594 / NRRL 2338).